The sequence spans 454 residues: Membrane-bound lytic murein transglycosylase F (454 aa).

A signal peptide spans 1–24 (MRRPLRRVTVVLLWVALAIGVAWF). The segment at 25 to 265 (YDYRRSMQSL…IYNRYYTAVD (241 aa)) is non-LT domain. The LT domain stretch occupies residues 266-454 (TFDYVDVKKF…YDILKQKKAV (189 aa)). Glu311 is a catalytic residue.

It in the N-terminal section; belongs to the bacterial solute-binding protein 3 family. This sequence in the C-terminal section; belongs to the transglycosylase Slt family.

It is found in the cell outer membrane. It catalyses the reaction Exolytic cleavage of the (1-&gt;4)-beta-glycosidic linkage between N-acetylmuramic acid (MurNAc) and N-acetylglucosamine (GlcNAc) residues in peptidoglycan, from either the reducing or the non-reducing ends of the peptidoglycan chains, with concomitant formation of a 1,6-anhydrobond in the MurNAc residue.. Murein-degrading enzyme that degrades murein glycan strands and insoluble, high-molecular weight murein sacculi, with the concomitant formation of a 1,6-anhydromuramoyl product. Lytic transglycosylases (LTs) play an integral role in the metabolism of the peptidoglycan (PG) sacculus. Their lytic action creates space within the PG sacculus to allow for its expansion as well as for the insertion of various structures such as secretion systems and flagella. In Desulfosudis oleivorans (strain DSM 6200 / JCM 39069 / Hxd3) (Desulfococcus oleovorans), this protein is Membrane-bound lytic murein transglycosylase F.